The sequence spans 61 residues: Truncated Cytokine response-modifying protein B (61 aa).

The protein is truncated in this strain and presumably inactive. It has similarities with variola virus CrmB, but the product is inactivated due to several premature stop codon. The chain is Truncated Cytokine response-modifying protein B from Bos taurus (Bovine).